The following is a 296-amino-acid chain: MTTTLTRPADGEGSVQVQQDASVRIQEGALVIAVYGKGGIGKSTTSSNLSAAFSKLGKRVLQIGCDPKHDSTFTLTHRMVPTVIDILEEVDFHSEELRPDDFMFEGFNGVKCVESGGPPAGTGCGGYVTGQTVKLLKEHHLLEDTDVVIFDVLGDVVCGGFAAPLQHANYCLIVTANDFDSIFAMNRIVAAINAKAKNYKVRLGGVIANRSADLDQIEKFNKETGLKTMAHFKNVDAIRRSRLKKCTIFEMDSSEEGVLECQNEYLALAQKMIDKVEPLEAEPLKDREIFDLLGFD.

ATP-binding positions include 39–44 and K68; that span reads GIGKST. S43 serves as a coordination point for Mg(2+). [4Fe-4S] cluster contacts are provided by C124 and C158. 209-210 contacts ATP; it reads NR.

The protein belongs to the NifH/BchL/ChlL family. Homodimer. Protochlorophyllide reductase is composed of three subunits; ChlL, ChlN and ChlB. [4Fe-4S] cluster serves as cofactor.

The catalysed reaction is chlorophyllide a + oxidized 2[4Fe-4S]-[ferredoxin] + 2 ADP + 2 phosphate = protochlorophyllide a + reduced 2[4Fe-4S]-[ferredoxin] + 2 ATP + 2 H2O. It functions in the pathway porphyrin-containing compound metabolism; chlorophyll biosynthesis (light-independent). Its function is as follows. Component of the dark-operative protochlorophyllide reductase (DPOR) that uses Mg-ATP and reduced ferredoxin to reduce ring D of protochlorophyllide (Pchlide) to form chlorophyllide a (Chlide). This reaction is light-independent. The L component serves as a unique electron donor to the NB-component of the complex, and binds Mg-ATP. This Prochlorococcus marinus (strain MIT 9303) protein is Light-independent protochlorophyllide reductase iron-sulfur ATP-binding protein.